We begin with the raw amino-acid sequence, 272 residues long: 4-diphosphocytidyl-2-C-methyl-D-erythritol kinase (272 aa).

Residue Lys-14 is part of the active site. 92 to 102 (PMGGGLGGGSS) serves as a coordination point for ATP. The active site involves Asp-132.

It belongs to the GHMP kinase family. IspE subfamily.

It carries out the reaction 4-CDP-2-C-methyl-D-erythritol + ATP = 4-CDP-2-C-methyl-D-erythritol 2-phosphate + ADP + H(+). It participates in isoprenoid biosynthesis; isopentenyl diphosphate biosynthesis via DXP pathway; isopentenyl diphosphate from 1-deoxy-D-xylulose 5-phosphate: step 3/6. Catalyzes the phosphorylation of the position 2 hydroxy group of 4-diphosphocytidyl-2C-methyl-D-erythritol. This Fervidobacterium nodosum (strain ATCC 35602 / DSM 5306 / Rt17-B1) protein is 4-diphosphocytidyl-2-C-methyl-D-erythritol kinase.